Reading from the N-terminus, the 253-residue chain is Isoprenyl transferase (253 aa).

Asp-32 is an active-site residue. Asp-32 provides a ligand contact to Mg(2+). Residues 33 to 36 (GNGR), Trp-37, Arg-45, His-49, and 77 to 79 (STE) contribute to the substrate site. Asn-80 acts as the Proton acceptor in catalysis. Substrate is bound by residues Trp-81, Arg-83, Arg-200, and 206–208 (RLS). Mg(2+) is bound at residue Glu-219.

The protein belongs to the UPP synthase family. As to quaternary structure, homodimer. Mg(2+) is required as a cofactor.

Functionally, catalyzes the condensation of isopentenyl diphosphate (IPP) with allylic pyrophosphates generating different type of terpenoids. This chain is Isoprenyl transferase, found in Clostridium perfringens (strain 13 / Type A).